The chain runs to 462 residues: Amino-acid permease AapA (462 aa).

A run of 12 helical transmembrane segments spans residues Leu-27 to His-47, Phe-48 to Met-68, Ala-96 to Leu-116, Leu-134 to Phe-154, Trp-160 to Ile-180, Gly-209 to Leu-229, Ile-252 to Leu-272, Phe-279 to Val-299, Ala-343 to Glu-363, Phe-366 to Ile-386, Pro-410 to Ala-430, and Ile-435 to Thr-455.

This sequence belongs to the amino acid-polyamine-organocation (APC) superfamily.

The protein resides in the cell membrane. Functionally, probable amino-acid or metabolite transport protein. The chain is Amino-acid permease AapA (aapA) from Bacillus subtilis (strain 168).